We begin with the raw amino-acid sequence, 117 residues long: Cell division protein FtsL (117 aa).

Topologically, residues 1–35 (MSNLAYQPEKQQRHAISPEKKVIVKKRASITLGEK) are cytoplasmic. The helical transmembrane segment at 36–56 (VLLVLFAAAVLSVSLLIVSKA) threads the bilayer. Residues 57–117 (YAAYQTNIEV…KDKKVKNIQE (61 aa)) lie on the Extracellular side of the membrane.

Belongs to the FtsL family. As to quaternary structure, monomer. Interacts with DivIB and DivIC. Interaction with DivIC stabilizes FtsL against RasP cleavage. In terms of processing, cleaved by RasP. Cleavage is important for turnover and function of FtsL.

Its subcellular location is the cell membrane. Its function is as follows. Essential cell division protein that may play a structural role. Probably involved in the regulation of the timing of cell division. Also required for sporulation. In Bacillus subtilis (strain 168), this protein is Cell division protein FtsL.